Consider the following 746-residue polypeptide: Taurocyamine kinase (746 aa).

2 Approximate repeats span residues 31–393 and 394–705; these read MQVE…PEGV and MPVE…YGEH. In terms of domain architecture, Phosphagen kinase N-terminal 1 spans 35–116; that stretch reads SLQNLQAKIR…FDAVIADYHK (82 aa). Residues 146–382 enclose the Phosphagen kinase C-terminal 1 domain; it reads LVVSTRVRLG…RALLELEVML (237 aa). ATP is bound by residues 149–153, His-212, and Arg-256; that span reads STRVR. Cys-298 is an active-site residue. Residues 307 to 311 and 335 to 340 contribute to the ATP site; these read RASVH and RGTHGE. A Phosphagen kinase N-terminal 2 domain is found at 398–479; sequence PLTYLAKLLE…LDPLICDYHG (82 aa). The 238-residue stretch at 509–746 folds into the Phosphagen kinase C-terminal 2 domain; the sequence is FIVSTRVRVG…AKMIEIEKGL (238 aa). Residues 512 to 516, His-575, and Arg-619 each bind ATP; that span reads STRVR. Cys-661 is an active-site residue. ATP-binding positions include 670-674 and 699-704; these read RASVL and RGLYGE.

This sequence belongs to the ATP:guanido phosphotransferase family. Requires Mg(2+) as cofactor.

The enzyme catalyses taurocyamine + ATP = N-phosphotaurocyamine + ADP + H(+). Functionally, this family of enzymes reversibly catalyzes the transfer of phosphate between ATP and various phosphogens (e.g. creatine phosphate). In Schistosoma mansoni (Blood fluke), this protein is Taurocyamine kinase.